The chain runs to 148 residues: Large ribosomal subunit protein uL13 (148 aa).

Belongs to the universal ribosomal protein uL13 family. In terms of assembly, part of the 50S ribosomal subunit.

Its function is as follows. This protein is one of the early assembly proteins of the 50S ribosomal subunit, although it is not seen to bind rRNA by itself. It is important during the early stages of 50S assembly. This Ureaplasma parvum serovar 3 (strain ATCC 27815 / 27 / NCTC 11736) protein is Large ribosomal subunit protein uL13.